Consider the following 608-residue polypeptide: Nuclear receptor subfamily 2 group C member 1 (608 aa).

The required for interaction with KAT2B stretch occupies residues 1-179 (MASIEEIAHQ…RLQRCIAFGM (179 aa)). The nuclear receptor DNA-binding region spans 111 to 186 (FDLCVVCGDK…FGMKQDSVQC (76 aa)). 2 NR C4-type zinc fingers span residues 114–134 (CVVCGDKASGRHYGEVTCEGC) and 150–169 (CRGSKDCIINKHHRNRCQYC). Ser-198 and Ser-216 each carry phosphoserine. The residue at position 221 (Thr-221) is a Phosphothreonine. Thr-223 is modified (phosphothreonine; by MAPK1). Residue Lys-251 forms a Glycyl lysine isopeptide (Lys-Gly) (interchain with G-Cter in SUMO); alternate linkage. Residue Lys-251 forms a Glycyl lysine isopeptide (Lys-Gly) (interchain with G-Cter in SUMO2); alternate linkage. An NR LBD domain is found at 353–595 (GNVHLIAGDS…SVIPHILKME (243 aa)). Ser-586 bears the Phosphoserine; by PKC mark. The required for interaction with NRIP1 stretch occupies residues 589 to 608 (PHILKMEPADYNSQIIGHSI). Residue Lys-593 forms a Glycyl lysine isopeptide (Lys-Gly) (interchain with G-Cter in SUMO2) linkage.

The protein belongs to the nuclear hormone receptor family. NR2 subfamily. Homodimer. Heterodimer; with NR2C2 which is required for chromatin remodeling and for binding to promoter regions such as globin DR1 repeats. Interacts with ESR1; the interaction prevents homodimerization of ESR1 and suppresses its transcriptional activity and cell growth. Interacts with NRIP1 (via its LXXLL motifs); the interaction provides corepressor activity. Interacts with HDAC3 (via the DNA-binding domain); the interaction recruits phosphorylated NR2C1 to PML bodies for sumoylation. Interacts with HDAC4 (via the DNA-binding domain). Interacts with PIAS1; the interaction is required for sumoylation of NR2C1. Interacts with UBE2I; the interaction is required for sumoylation of NR2C1. Interacts with KAT2B; the interaction acts as a corepressor of gene expression. Sumoylation requires both PIAS1 and UBE2I. Sumoylation appears to dissociate NR2C1 from the PML nuclear bodies. Enhances the interaction with NRIP1 but inhibits interaction with KAT2B. In proliferating cells, stimulation by all-trans retinoic acid, activation of MAPK1-mediated phosphorylation and recruitment to PML bodies with subsequent sumoylation, suppresses OCT4 expression. Post-translationally, phosphorylated on several serine and threonine residues. Phosphorylation on Thr-223, stimulated by all-trans retinoic acid (atRA) mediates PML location and sumoylation in proliferating cells which then modulates its association with effector molecules, KAT2B and NRIP1. Phosphorylation on Ser-586 by PKC is important for protein stability and function as activator of RARB.

It localises to the nucleus. It is found in the PML body. Orphan nuclear receptor. Binds the IR7 element in the promoter of its own gene in an autoregulatory negative feedback mechanism. Primarily repressor of a broad range of genes including ESR1 and RARB. Together with NR2C2, forms the core of the DRED (direct repeat erythroid-definitive) complex that represses embryonic and fetal globin transcription. Binds to hormone response elements (HREs) consisting of two 5'-AGGTCA-3' half site direct repeat consensus sequences. Also activator of OCT4 gene expression. Plays a fundamental role in early embryogenesis and regulates embryonic stem cell proliferation and differentiation. Mediator of retinoic acid-regulated preadipocyte proliferation. This chain is Nuclear receptor subfamily 2 group C member 1 (NR2C1), found in Bos taurus (Bovine).